Consider the following 572-residue polypeptide: Proline--tRNA ligase (572 aa).

Belongs to the class-II aminoacyl-tRNA synthetase family. ProS type 1 subfamily. Homodimer.

The protein resides in the cytoplasm. It catalyses the reaction tRNA(Pro) + L-proline + ATP = L-prolyl-tRNA(Pro) + AMP + diphosphate. In terms of biological role, catalyzes the attachment of proline to tRNA(Pro) in a two-step reaction: proline is first activated by ATP to form Pro-AMP and then transferred to the acceptor end of tRNA(Pro). As ProRS can inadvertently accommodate and process non-cognate amino acids such as alanine and cysteine, to avoid such errors it has two additional distinct editing activities against alanine. One activity is designated as 'pretransfer' editing and involves the tRNA(Pro)-independent hydrolysis of activated Ala-AMP. The other activity is designated 'posttransfer' editing and involves deacylation of mischarged Ala-tRNA(Pro). The misacylated Cys-tRNA(Pro) is not edited by ProRS. The chain is Proline--tRNA ligase from Pectobacterium atrosepticum (strain SCRI 1043 / ATCC BAA-672) (Erwinia carotovora subsp. atroseptica).